The sequence spans 436 residues: Type II methyltransferase M.BsuRI (436 aa).

Residues 59–409 (INVLSLFSGC…SPIANWAINY (351 aa)) enclose the SAM-dependent MTase C5-type domain. Residue cysteine 157 is part of the active site.

This sequence belongs to the class I-like SAM-binding methyltransferase superfamily. C5-methyltransferase family. As to quaternary structure, monomer.

It catalyses the reaction a 2'-deoxycytidine in DNA + S-adenosyl-L-methionine = a 5-methyl-2'-deoxycytidine in DNA + S-adenosyl-L-homocysteine + H(+). In terms of biological role, a methylase, recognizes the double-stranded sequence 5'-GGCC-3', methylates C-3 on both strands, and protects the DNA from cleavage by the BsuRI endonuclease. The protein is Type II methyltransferase M.BsuRI (hsdRM) of Bacillus subtilis.